The chain runs to 169 residues: Large ribosomal subunit protein bL17 (169 aa).

Positions 124-169 are disordered; the sequence is EKAVKRQDRSRRVKGSKKAIDEKTSDDSASVEAAPAAPEAEEKKDA. Basic residues predominate over residues 131–140; it reads DRSRRVKGSK. Low complexity predominate over residues 150 to 161; it reads DSASVEAAPAAP.

Belongs to the bacterial ribosomal protein bL17 family. Part of the 50S ribosomal subunit. Contacts protein L32.

The polypeptide is Large ribosomal subunit protein bL17 (Chloroherpeton thalassium (strain ATCC 35110 / GB-78)).